Consider the following 828-residue polypeptide: Periplasmic nitrate reductase (828 aa).

Residues 1–31 (MKLSRRSFMKANAVAAAAAAAGLSVPGVARA) constitute a signal peptide (tat-type signal). One can recognise a 4Fe-4S Mo/W bis-MGD-type domain in the interval 39–95 (IKWDKAPCRFCGTGCGVLVGTQQGRVVACQGDPDAPVNRGLNCIKGYFLPKIMYGKD). Positions 46, 49, 53, and 81 each coordinate [4Fe-4S] cluster. Residues Lys-83, Gln-150, Asn-175, Cys-179, 212 to 219 (WGSNMAEM), 243 to 247 (STFQH), 262 to 264 (QSD), Met-372, Gln-376, Asn-482, 508 to 509 (SD), Lys-531, Asp-558, and 718 to 727 (TGRVLEHWHT) each bind Mo-bis(molybdopterin guanine dinucleotide). Phe-794 is a binding site for substrate. Asn-802 and Lys-819 together coordinate Mo-bis(molybdopterin guanine dinucleotide).

This sequence belongs to the prokaryotic molybdopterin-containing oxidoreductase family. NasA/NapA/NarB subfamily. As to quaternary structure, component of the periplasmic nitrate reductase NapAB complex composed of NapA and NapB. It depends on [4Fe-4S] cluster as a cofactor. Requires Mo-bis(molybdopterin guanine dinucleotide) as cofactor. Predicted to be exported by the Tat system. The position of the signal peptide cleavage has not been experimentally proven.

The protein resides in the periplasm. It carries out the reaction 2 Fe(II)-[cytochrome] + nitrate + 2 H(+) = 2 Fe(III)-[cytochrome] + nitrite + H2O. In terms of biological role, catalytic subunit of the periplasmic nitrate reductase complex NapAB. Receives electrons from NapB and catalyzes the reduction of nitrate to nitrite. This chain is Periplasmic nitrate reductase, found in Salmonella arizonae (strain ATCC BAA-731 / CDC346-86 / RSK2980).